The chain runs to 644 residues: Chaperone protein DnaK (644 aa).

T195 carries the post-translational modification Phosphothreonine; by autocatalysis. The disordered stretch occupies residues 598–644 (KQAAPGAGAPGAGPGPEAAGGAQQAQAEPKKDEGVIDAEYVDVDEKK). Residues 612–624 (GPEAAGGAQQAQA) are compositionally biased toward low complexity. Over residues 632 to 644 (VIDAEYVDVDEKK) the composition is skewed to acidic residues.

It belongs to the heat shock protein 70 family.

In terms of biological role, acts as a chaperone. The chain is Chaperone protein DnaK from Koribacter versatilis (strain Ellin345).